The following is a 396-amino-acid chain: Aspartate aminotransferase (396 aa).

L-aspartate is bound by residues Gly34, Trp130, and Asn183. Position 246 is an N6-(pyridoxal phosphate)lysine (Lys246). Arg374 provides a ligand contact to L-aspartate.

This sequence belongs to the class-I pyridoxal-phosphate-dependent aminotransferase family. In terms of assembly, homodimer. It depends on pyridoxal 5'-phosphate as a cofactor.

The protein resides in the cytoplasm. The catalysed reaction is L-aspartate + 2-oxoglutarate = oxaloacetate + L-glutamate. The sequence is that of Aspartate aminotransferase (aspC) from Escherichia coli (strain K12).